A 493-amino-acid polypeptide reads, in one-letter code: Glutamate--tRNA ligase (493 aa).

The 'HIGH' region motif lies at 10 to 20; sequence PSPTGDPHVGT. Residues 251–255 carry the 'KMSKS' region motif; it reads KLSKR. K254 serves as a coordination point for ATP.

The protein belongs to the class-I aminoacyl-tRNA synthetase family. Glutamate--tRNA ligase type 1 subfamily. Monomer.

Its subcellular location is the cytoplasm. The enzyme catalyses tRNA(Glu) + L-glutamate + ATP = L-glutamyl-tRNA(Glu) + AMP + diphosphate. Functionally, catalyzes the attachment of glutamate to tRNA(Glu) in a two-step reaction: glutamate is first activated by ATP to form Glu-AMP and then transferred to the acceptor end of tRNA(Glu). The sequence is that of Glutamate--tRNA ligase from Marinomonas sp. (strain MWYL1).